The sequence spans 526 residues: Probable feruloyl esterase B-2 (526 aa).

The N-terminal stretch at 1 to 19 (MPSLRRLLPFLAAGSAALA) is a signal peptide. 2 cysteine pairs are disulfide-bonded: C28-C75 and C63-C114. N53, N85, N98, and N138 each carry an N-linked (GlcNAc...) asparagine glycan. 3 disulfides stabilise this stretch: C187/C441, C256/C273, and C282/C291. Residue S188 is the Acyl-ester intermediate of the active site. N246 carries an N-linked (GlcNAc...) asparagine glycan. Ca(2+)-binding residues include D257, D260, A262, D264, and I266. 2 N-linked (GlcNAc...) asparagine glycosylation sites follow: N287 and N311. Active-site charge relay system residues include D400 and H440. N-linked (GlcNAc...) asparagine glycans are attached at residues N490 and N516. Residues C503 and C525 are joined by a disulfide bond.

It belongs to the tannase family.

The protein resides in the secreted. The enzyme catalyses feruloyl-polysaccharide + H2O = ferulate + polysaccharide.. Functionally, involved in degradation of plant cell walls. Hydrolyzes the feruloyl-arabinose ester bond in arabinoxylans as well as the feruloyl-galactose and feruloyl-arabinose ester bonds in pectin. In Aspergillus oryzae (strain ATCC 42149 / RIB 40) (Yellow koji mold), this protein is Probable feruloyl esterase B-2 (faeB-2).